The primary structure comprises 265 residues: Triosephosphate isomerase (265 aa).

8–10 (NWK) is a binding site for substrate. The active-site Electrophile is the His103. Glu182 acts as the Proton acceptor in catalysis. Substrate-binding positions include Gly188, Ser226, and 247 to 248 (GG).

It belongs to the triosephosphate isomerase family. As to quaternary structure, homodimer.

Its subcellular location is the cytoplasm. It catalyses the reaction D-glyceraldehyde 3-phosphate = dihydroxyacetone phosphate. The protein operates within carbohydrate biosynthesis; gluconeogenesis. It participates in carbohydrate degradation; glycolysis; D-glyceraldehyde 3-phosphate from glycerone phosphate: step 1/1. Involved in the gluconeogenesis. Catalyzes stereospecifically the conversion of dihydroxyacetone phosphate (DHAP) to D-glyceraldehyde-3-phosphate (G3P). The chain is Triosephosphate isomerase from Psychrobacter sp. (strain PRwf-1).